Reading from the N-terminus, the 90-residue chain is Probable Fe(2+)-trafficking protein (90 aa).

The protein belongs to the Fe(2+)-trafficking protein family.

Functionally, could be a mediator in iron transactions between iron acquisition and iron-requiring processes, such as synthesis and/or repair of Fe-S clusters in biosynthetic enzymes. The chain is Probable Fe(2+)-trafficking protein from Hydrogenovibrio crunogenus (strain DSM 25203 / XCL-2) (Thiomicrospira crunogena).